A 185-amino-acid chain; its full sequence is Large ribosomal subunit protein uL5 (185 aa).

The protein belongs to the universal ribosomal protein uL5 family. Part of the 50S ribosomal subunit; part of the 5S rRNA/L5/L18/L25 subcomplex. Contacts the 5S rRNA and the P site tRNA. Forms a bridge to the 30S subunit in the 70S ribosome.

In terms of biological role, this is one of the proteins that bind and probably mediate the attachment of the 5S RNA into the large ribosomal subunit, where it forms part of the central protuberance. In the 70S ribosome it contacts protein S13 of the 30S subunit (bridge B1b), connecting the 2 subunits; this bridge is implicated in subunit movement. Contacts the P site tRNA; the 5S rRNA and some of its associated proteins might help stabilize positioning of ribosome-bound tRNAs. This Azorhizobium caulinodans (strain ATCC 43989 / DSM 5975 / JCM 20966 / LMG 6465 / NBRC 14845 / NCIMB 13405 / ORS 571) protein is Large ribosomal subunit protein uL5.